We begin with the raw amino-acid sequence, 342 residues long: Methylthioribose-1-phosphate isomerase (342 aa).

Substrate is bound by residues 44–46 (RGA), Arg85, and Gln192. Asp233 acts as the Proton donor in catalysis. 243–244 (NK) serves as a coordination point for substrate.

The protein belongs to the eIF-2B alpha/beta/delta subunits family. MtnA subfamily.

It carries out the reaction 5-(methylsulfanyl)-alpha-D-ribose 1-phosphate = 5-(methylsulfanyl)-D-ribulose 1-phosphate. Its pathway is amino-acid biosynthesis; L-methionine biosynthesis via salvage pathway; L-methionine from S-methyl-5-thio-alpha-D-ribose 1-phosphate: step 1/6. Catalyzes the interconversion of methylthioribose-1-phosphate (MTR-1-P) into methylthioribulose-1-phosphate (MTRu-1-P). The polypeptide is Methylthioribose-1-phosphate isomerase (Caldicellulosiruptor saccharolyticus (strain ATCC 43494 / DSM 8903 / Tp8T 6331)).